Consider the following 540-residue polypeptide: Phosphoenolpyruvate carboxykinase (ATP) (540 aa).

Residues Arg67, Tyr207, and Lys213 each contribute to the substrate site. Residues Lys213, His232, and 248-256 (GLSGTGKTT) contribute to the ATP site. Mn(2+) is bound by residues Lys213 and His232. Asp269 provides a ligand contact to Mn(2+). ATP is bound by residues Glu297, Arg333, 449–450 (RI), and Thr455. Arg333 lines the substrate pocket.

This sequence belongs to the phosphoenolpyruvate carboxykinase (ATP) family. As to quaternary structure, monomer. Mn(2+) is required as a cofactor.

It localises to the cytoplasm. The enzyme catalyses oxaloacetate + ATP = phosphoenolpyruvate + ADP + CO2. It participates in carbohydrate biosynthesis; gluconeogenesis. Functionally, involved in the gluconeogenesis. Catalyzes the conversion of oxaloacetate (OAA) to phosphoenolpyruvate (PEP) through direct phosphoryl transfer between the nucleoside triphosphate and OAA. The chain is Phosphoenolpyruvate carboxykinase (ATP) from Aliivibrio fischeri (strain MJ11) (Vibrio fischeri).